Here is a 286-residue protein sequence, read N- to C-terminus: Shikimate dehydrogenase (NADP(+)) (286 aa).

Shikimate contacts are provided by residues 21–23 (TLS) and threonine 68. The active-site Proton acceptor is lysine 72. Glutamate 84 contributes to the NADP(+) binding site. Residues asparagine 93 and aspartate 108 each coordinate shikimate. Residues 132–136 (GNGGA) and leucine 230 each bind NADP(+). Tyrosine 232 contacts shikimate. Glycine 253 is a binding site for NADP(+).

It belongs to the shikimate dehydrogenase family. As to quaternary structure, homodimer.

It catalyses the reaction shikimate + NADP(+) = 3-dehydroshikimate + NADPH + H(+). It participates in metabolic intermediate biosynthesis; chorismate biosynthesis; chorismate from D-erythrose 4-phosphate and phosphoenolpyruvate: step 4/7. Functionally, involved in the biosynthesis of the chorismate, which leads to the biosynthesis of aromatic amino acids. Catalyzes the reversible NADPH linked reduction of 3-dehydroshikimate (DHSA) to yield shikimate (SA). The polypeptide is Shikimate dehydrogenase (NADP(+)) (Microcystis aeruginosa (strain NIES-843 / IAM M-2473)).